A 454-amino-acid polypeptide reads, in one-letter code: Probable diacyglycerol O-acyltransferase tgs2 (454 aa).

His139 acts as the Proton acceptor in catalysis.

It belongs to the long-chain O-acyltransferase family.

It carries out the reaction an acyl-CoA + a 1,2-diacyl-sn-glycerol = a triacyl-sn-glycerol + CoA. The enzyme catalyses a long chain fatty alcohol + a fatty acyl-CoA = a wax ester + CoA. It functions in the pathway glycerolipid metabolism; triacylglycerol biosynthesis. Functionally, catalyzes the terminal and only committed step in triacylglycerol synthesis by using diacylglycerol and fatty acyl CoA as substrates. Required for storage lipid synthesis. This chain is Probable diacyglycerol O-acyltransferase tgs2 (tgs2), found in Mycobacterium tuberculosis (strain CDC 1551 / Oshkosh).